The chain runs to 128 residues: Iron-sulfur cluster insertion protein ErpA (128 aa).

Residues Cys56, Cys120, and Cys122 each contribute to the iron-sulfur cluster site.

This sequence belongs to the HesB/IscA family. Homodimer. Iron-sulfur cluster serves as cofactor.

Its function is as follows. Required for insertion of 4Fe-4S clusters for at least IspG. The protein is Iron-sulfur cluster insertion protein ErpA of Xanthomonas campestris pv. campestris (strain 8004).